The primary structure comprises 433 residues: GTPase Der (433 aa).

EngA-type G domains lie at 3-167 (KIVS…DKNI) and 175-349 (PRIA…FNLR). GTP is bound by residues 9–16 (GRPNVGKS), 56–60 (DTGGY), 119–122 (NKID), 181–188 (GRPNVGKS), 228–232 (DTAGI), and 293–296 (NKWD). The region spanning 350-433 (LRIKTSLLNK…IPIKILFRLK (84 aa)) is the KH-like domain.

It belongs to the TRAFAC class TrmE-Era-EngA-EngB-Septin-like GTPase superfamily. EngA (Der) GTPase family. Associates with the 50S ribosomal subunit.

GTPase that plays an essential role in the late steps of ribosome biogenesis. The protein is GTPase Der of Karelsulcia muelleri (strain GWSS) (Sulcia muelleri).